The following is a 212-amino-acid chain: Thiamine-phosphate synthase (212 aa).

4-amino-2-methyl-5-(diphosphooxymethyl)pyrimidine-binding positions include 41–45 (QYREK) and Asp76. Asp77 and Asp96 together coordinate Mg(2+). Ser114 contributes to the 4-amino-2-methyl-5-(diphosphooxymethyl)pyrimidine binding site. 141–143 (TTS) contacts 2-[(2R,5Z)-2-carboxy-4-methylthiazol-5(2H)-ylidene]ethyl phosphate. A 4-amino-2-methyl-5-(diphosphooxymethyl)pyrimidine-binding site is contributed by Lys144. Residues Gly172 and 192-193 (IS) each bind 2-[(2R,5Z)-2-carboxy-4-methylthiazol-5(2H)-ylidene]ethyl phosphate.

It belongs to the thiamine-phosphate synthase family. Mg(2+) serves as cofactor.

It carries out the reaction 2-[(2R,5Z)-2-carboxy-4-methylthiazol-5(2H)-ylidene]ethyl phosphate + 4-amino-2-methyl-5-(diphosphooxymethyl)pyrimidine + 2 H(+) = thiamine phosphate + CO2 + diphosphate. The catalysed reaction is 2-(2-carboxy-4-methylthiazol-5-yl)ethyl phosphate + 4-amino-2-methyl-5-(diphosphooxymethyl)pyrimidine + 2 H(+) = thiamine phosphate + CO2 + diphosphate. It catalyses the reaction 4-methyl-5-(2-phosphooxyethyl)-thiazole + 4-amino-2-methyl-5-(diphosphooxymethyl)pyrimidine + H(+) = thiamine phosphate + diphosphate. It participates in cofactor biosynthesis; thiamine diphosphate biosynthesis; thiamine phosphate from 4-amino-2-methyl-5-diphosphomethylpyrimidine and 4-methyl-5-(2-phosphoethyl)-thiazole: step 1/1. In terms of biological role, condenses 4-methyl-5-(beta-hydroxyethyl)thiazole monophosphate (THZ-P) and 2-methyl-4-amino-5-hydroxymethyl pyrimidine pyrophosphate (HMP-PP) to form thiamine monophosphate (TMP). This Leuconostoc citreum (strain KM20) protein is Thiamine-phosphate synthase.